A 707-amino-acid polypeptide reads, in one-letter code: MVDPVPEEEKAGAEPGDSGGDEAVASVPPDSQGAQEPAASSASASASAAVPRKAEVPCAAAEGGRREQSPLLHLDLFNFDCPEAEGSRYVLTSPRSLEACARCAVKPVELLPRALADLVREAPGRSMRVATGLYEAYEAERRAKLQQCRAERERIMREEKRRLFTPLSPAAAAAAAAAAASAPSAGSSSSCSSASLPASPAPRAARKASPSPSSARTQPPPAGSRTGRKSHSLDSLSRRREGALSSESGASSSSYSGESLRELRWPPRASARNSCPAGSASSTTNAPGRPSALTLVPITGRSFSLGDLSHSPQTAQHVERIVRQVRAERGLRGVPERDRKIAALMLARHQEELLLLEQRAAAHGQWELQRVHAKQRREREEREKQRALEQGRRAWAAQVEERRGRRGREEREAARRRQRQYERSEERRRELAERQGLLRRERAERAAREDRLRKLQQEQNLKQREEGLQEGRERAEQIRRERAQRAARAKQRQEGQLQREKRELSRAERARHEALLQGRTRQQRQEREGLRSSLEASLGRAQENYEHLVEQRTRELRERARREELQGRRAKEAAERKEREHQAHLEALARAGERRLQHATQVAEEAVQQKARRVGQSRLEKERAQRANKEKVERDEDCRRRELLQAIGRKLERSEQLTRERRSALESARSTARASFHVREKVREETNTRSFDRMVREAQLHASLDRK.

Disordered regions lie at residues 1 to 65 (MVDP…EGGR) and 183 to 294 (PSAG…SALT). Low complexity-rich tracts occupy residues 38 to 49 (AASSASASASAA), 183 to 215 (PSAGSSSSCSSASLPASPAPRAARKASPSPSSA), and 243 to 258 (ALSSESGASSSSYSGE). Serine 311 bears the Phosphoserine mark. Residues 364–605 (GQWELQRVHA…LQHATQVAEE (242 aa)) adopt a coiled-coil conformation. Disordered regions lie at residues 372-426 (HAKQ…RSEE), 454-581 (KLQQ…EREH), 597-637 (QHAT…RDED), and 652-707 (ERSE…LDRK). Basic and acidic residues-rich tracts occupy residues 377 to 392 (REREEREKQRALEQGR), 399 to 426 (VEERRGRRGREEREAARRRQRQYERSEE), 454 to 484 (KLQQEQNLKQREEGLQEGRERAEQIRRERAQ), 491 to 514 (QRQEGQLQREKRELSRAERARHEA), 543 to 581 (ENYEHLVEQRTRELRERARREELQGRRAKEAAERKEREH), 618 to 637 (RLEKERAQRANKEKVERDED), and 652 to 664 (ERSEQLTRERRSA). The segment covering 665 to 675 (LESARSTARAS) has biased composition (low complexity). Positions 677–707 (HVREKVREETNTRSFDRMVREAQLHASLDRK) are enriched in basic and acidic residues.

The protein is Coiled-coil domain-containing protein 177 (CCDC177) of Homo sapiens (Human).